The primary structure comprises 327 residues: Diacylglycerol acyltransferase/mycolyltransferase Ag85B (327 aa).

A signal peptide spans 1 to 38; it reads MIDVSGKIRAWGRWLLVGAAATLPSLISLAGGAATASA. Position 80–81 (80–81) interacts with substrate; it reads LR. A fibronectin-binding region spans residues 96–106; it reads FEWYYQSGLSV. Residues Cys-125 and Cys-130 are joined by a disulfide bond. Substrate-binding residues include Ser-164 and Asp-192. The active-site Nucleophile is Ser-164. Residue Glu-268 is part of the active site. Substrate contacts are provided by residues 270-273, Lys-277, and 300-302; these read FVHG and HSW. His-300 is a catalytic residue.

It belongs to the mycobacterial A85 antigen family.

Its subcellular location is the secreted. The catalysed reaction is 2 alpha,alpha'-trehalose 6-mycolate = alpha,alpha'-trehalose 6,6'-bismycolate + alpha,alpha-trehalose. It catalyses the reaction an acyl-CoA + a 1,2-diacyl-sn-glycerol = a triacyl-sn-glycerol + CoA. Functionally, the antigen 85 proteins (FbpA, FbpB, FbpC) are responsible for the high affinity of mycobacteria for fibronectin, a large adhesive glycoprotein, which facilitates the attachment of M.tuberculosis to murine alveolar macrophages (AMs). They also help to maintain the integrity of the cell wall by catalyzing the transfer of mycolic acids to cell wall arabinogalactan and through the synthesis of alpha,alpha-trehalose dimycolate (TDM, cord factor). They catalyze the transfer of a mycoloyl residue from one molecule of alpha,alpha-trehalose monomycolate (TMM) to another TMM, leading to the formation of TDM. This is Diacylglycerol acyltransferase/mycolyltransferase Ag85B (fbpB) from Mycobacterium leprae (strain TN).